Here is a 551-residue protein sequence, read N- to C-terminus: Medium/long-chain-fatty-acid--CoA/3-oxocholest-4-en-26-oate--CoA ligase (551 aa).

ATP is bound by residues 172–180 (TGGTTGFPK), Asp-417, Arg-432, and Lys-523.

This sequence belongs to the ATP-dependent AMP-binding enzyme family.

It carries out the reaction a medium-chain fatty acid + ATP + CoA = a medium-chain fatty acyl-CoA + AMP + diphosphate. It catalyses the reaction a long-chain fatty acid + ATP + CoA = a long-chain fatty acyl-CoA + AMP + diphosphate. The enzyme catalyses (25S)-3-oxocholest-4-en-26-oate + ATP + CoA = (25S)-3-oxocholest-4-en-26-oyl-CoA + AMP + diphosphate. The protein operates within lipid metabolism; fatty acid biosynthesis. It functions in the pathway steroid metabolism; cholesterol metabolism. Its function is as follows. Plays an essential role in degradation of the side chains of C-24 branched-chain sterols. Not essential for degradation of straight chain sterols such as cholesterol. Catalyzes the activation of medium/long-chain fatty acids as acyl-coenzyme A (acyl-CoA), which are then transferred to the multifunctional polyketide synthase (PKS) type III for further chain extension. May be involved in the degradation of cholesterol via the degradation of the side chains of C-24 branched-chain sterols. The polypeptide is Medium/long-chain-fatty-acid--CoA/3-oxocholest-4-en-26-oate--CoA ligase (Mycolicibacterium smegmatis (strain ATCC 700084 / mc(2)155) (Mycobacterium smegmatis)).